We begin with the raw amino-acid sequence, 290 residues long: UPF0761 membrane protein YihY (290 aa).

6 helical membrane-spanning segments follow: residues 44-64, 104-124, 140-160, 183-203, 210-230, and 244-264; these read LLSL…FPMF, VGAC…DSAL, FAVY…SLAI, ILPL…VPTT, ALVG…GFAL, and VLAV…IVLL.

This sequence belongs to the UPF0761 family.

It localises to the cell inner membrane. The sequence is that of UPF0761 membrane protein YihY from Salmonella agona (strain SL483).